The sequence spans 164 residues: Thiol peroxidase (164 aa).

The Thioredoxin domain maps to 16–162 (LQVGDIAKDF…YEAAINAAKI (147 aa)). Cysteine 58 acts as the Cysteine sulfenic acid (-SOH) intermediate in catalysis. An intrachain disulfide couples cysteine 58 to cysteine 92.

Belongs to the peroxiredoxin family. Tpx subfamily. In terms of assembly, homodimer.

It catalyses the reaction a hydroperoxide + [thioredoxin]-dithiol = an alcohol + [thioredoxin]-disulfide + H2O. Thiol-specific peroxidase that catalyzes the reduction of hydrogen peroxide and organic hydroperoxides to water and alcohols, respectively. Plays a role in cell protection against oxidative stress by detoxifying peroxides. The chain is Thiol peroxidase from Streptococcus agalactiae serotype III (strain NEM316).